Here is a 483-residue protein sequence, read N- to C-terminus: Altronate oxidoreductase (483 aa).

Residue 18 to 29 (IIQFGEGNFLRA) coordinates NAD(+).

It belongs to the mannitol dehydrogenase family. UxaB subfamily.

It carries out the reaction D-altronate + NAD(+) = keto-D-tagaturonate + NADH + H(+). The protein operates within carbohydrate metabolism; pentose and glucuronate interconversion. The polypeptide is Altronate oxidoreductase (Escherichia coli O17:K52:H18 (strain UMN026 / ExPEC)).